The sequence spans 347 residues: GMP reductase (347 aa).

108–131 contacts NADP(+); the sequence is ADFQKTKDIMALTDDLIFICIDIA. Glycine 181 and glycine 183 together coordinate K(+). Catalysis depends on cysteine 186, which acts as the Thioimidate intermediate. NADP(+) is bound at residue 216–239; that stretch reads IIGDGGCSCAGDVSKAFGGGADFV.

It belongs to the IMPDH/GMPR family. GuaC type 1 subfamily. In terms of assembly, homotetramer.

The enzyme catalyses IMP + NH4(+) + NADP(+) = GMP + NADPH + 2 H(+). Functionally, catalyzes the irreversible NADPH-dependent deamination of GMP to IMP. It functions in the conversion of nucleobase, nucleoside and nucleotide derivatives of G to A nucleotides, and in maintaining the intracellular balance of A and G nucleotides. This Aliivibrio fischeri (strain ATCC 700601 / ES114) (Vibrio fischeri) protein is GMP reductase.